A 1050-amino-acid chain; its full sequence is Inositol hexakisphosphate kinase 1 (1050 aa).

4 disordered regions span residues 87-117 (KITRSEATPKSVPEGLQVSEKKNNPDTLSSS), 129-177 (PAIK…IQNV), 269-319 (RQEN…DNEH), and 396-423 (SDLDQENNGKNDTSNENKDIEVNHNNND). At S150 the chain carries Phosphoserine. Residues 156–173 (KQQSHQPQVLHHQTSLKP) show a composition bias toward polar residues. Over residues 290–306 (ESIKEKPNTFEQDKEGE) the composition is skewed to basic and acidic residues. The span at 307–316 (QADEEEDEGD) shows a compositional bias: acidic residues. The residue at position 396 (S396) is a Phosphoserine. A compositionally biased stretch (basic and acidic residues) spans 402-417 (NNGKNDTSNENKDIEV). Position 469 is a phosphoserine (S469). The segment covering 508–522 (NDSYFSSSSSHNSCS) has biased composition (low complexity). Disordered stretches follow at residues 508–539 (NDSYFSSSSSHNSCSFGERGNTNKLKRRDSGS) and 562–625 (RKRN…PNLQ). S537, S539, S566, S583, S589, S646, S664, and S670 each carry phosphoserine. Residues 566-624 (SNTTTMGNHNARLGSSPSFLTQKSRASSHDASNTSMKTLGDSSSQASLQMDDSKVNPNL) show a composition bias toward polar residues. 772-780 (PCALDLKMG) is a binding site for substrate.

It belongs to the inositol phosphokinase (IPK) family.

Its subcellular location is the cytoplasm. The enzyme catalyses 1D-myo-inositol hexakisphosphate + ATP = 5-diphospho-1D-myo-inositol 1,2,3,4,6-pentakisphosphate + ADP. It catalyses the reaction 1-diphospho-1D-myo-inositol 2,3,4,5,6-pentakisphosphate + ATP + H(+) = 1,5-bis(diphospho)-1D-myo-inositol 2,3,4,6-tetrakisphosphate + ADP. Converts inositol hexakisphosphate (InsP6) to diphosphoinositol pentakisphosphate (InsP7/PP-InsP5). Involved in phosphate regulation and polyphosphate accumulation. Required for resistance to salt stress, cell wall integrity, vacuole morphogenesis, and telomere maintenance. In Saccharomyces cerevisiae (strain ATCC 204508 / S288c) (Baker's yeast), this protein is Inositol hexakisphosphate kinase 1 (KCS1).